Consider the following 267-residue polypeptide: Putative carboxymethylenebutenolidase (267 aa).

Active-site residues include cysteine 137, aspartate 194, and histidine 226.

Belongs to the dienelactone hydrolase family.

It carries out the reaction 2-(5-oxo-2,5-dihydrofuran-2-ylidene)acetate + H2O = 4-oxohex-2-enedioate + H(+). This Yersinia pestis protein is Putative carboxymethylenebutenolidase.